Here is a 146-residue protein sequence, read N- to C-terminus: Transcriptional regulator MraZ (146 aa).

2 consecutive SpoVT-AbrB domains span residues 6–49 and 78–121; these read TYDH…TEEE and THEV…DQKS.

The protein belongs to the MraZ family. Forms oligomers.

The protein resides in the cytoplasm. It localises to the nucleoid. The polypeptide is Transcriptional regulator MraZ (Mesoplasma florum (strain ATCC 33453 / NBRC 100688 / NCTC 11704 / L1) (Acholeplasma florum)).